We begin with the raw amino-acid sequence, 200 residues long: BREX protein BrxA (200 aa).

It belongs to the BrxA family.

Its function is as follows. BREX systems (bacteriophage exclusion) provide immunity against bacteriophage. Part of a type 1 BREX system. This system allows phage adsorption but prevents phage DNA replication, without degradation of the phage DNA. Methylation of bacterial DNA by PglX probably guides self/non-self discrimination. When the brxA-brxB-brxC-pglX and pglZ-brxL operons are transformed into a susceptible B.subtilis strain (BEST7003) they confer resistance to bacteriophages SPbeta, SP16, Zeta, phi3T and SP02 and partial protection to phages SP01 and SP82G (these include lytic and temperate phage). They do not protect against phages phi105, rho10 or rho14. Additionally confers a very slight reduction in efficiency of plasmid transformation. This is BREX protein BrxA from Bacillus cereus (strain H3081.97).